The following is a 348-amino-acid chain: Anthranilate phosphoribosyltransferase (348 aa).

5-phospho-alpha-D-ribose 1-diphosphate contacts are provided by residues glycine 93, 96–97, threonine 101, 103–106, 121–129, and serine 133; these read GD, NVST, and KHGNRAVSS. Glycine 93 lines the anthranilate pocket. Position 105 (serine 105) interacts with Mg(2+). Asparagine 124 contacts anthranilate. Arginine 179 is an anthranilate binding site. Residues aspartate 238 and glutamate 239 each contribute to the Mg(2+) site.

The protein belongs to the anthranilate phosphoribosyltransferase family. Homodimer. Requires Mg(2+) as cofactor.

It catalyses the reaction N-(5-phospho-beta-D-ribosyl)anthranilate + diphosphate = 5-phospho-alpha-D-ribose 1-diphosphate + anthranilate. It functions in the pathway amino-acid biosynthesis; L-tryptophan biosynthesis; L-tryptophan from chorismate: step 2/5. Functionally, catalyzes the transfer of the phosphoribosyl group of 5-phosphorylribose-1-pyrophosphate (PRPP) to anthranilate to yield N-(5'-phosphoribosyl)-anthranilate (PRA). The sequence is that of Anthranilate phosphoribosyltransferase from Desulfotalea psychrophila (strain LSv54 / DSM 12343).